The chain runs to 331 residues: MHTAEILETLASGGVLPPETAHMAFDRLMSGEMTPAQAGSFLMGLRSHGETPELVASAVRAALAHARLIQGLEYDRIDIVGTGGDGRNSFNCSTAAALTLAGMGYKVVKHGNRAVSSTSGSADVVEGLGLPLETAPEDVPVLLARHNFVFLFAPFYHPAFRHVMPVRRDLGIRTLFNVLGPLLNPARPTRMLLGVAKPAMLHTMADALLLTGVRRAAVVHGAGGYDELTTMGPARVVMVRDGATEEMEINPADHGFAPCTPAQLEVHDRQEALEVMRLLLAGEGPAPMLDMMAFNAGLAVYLMEDSMPISAAMARARQAVAGGAGGKVLDA.

5-phospho-alpha-D-ribose 1-diphosphate is bound by residues Gly-81, 84 to 85, Ser-89, 91 to 94, 109 to 117, and Ser-121; these read GD, NCST, and KHGNRAVSS. Residue Gly-81 participates in anthranilate binding. Ser-93 contributes to the Mg(2+) binding site. Position 112 (Asn-112) interacts with anthranilate. Anthranilate is bound at residue Arg-167. The Mg(2+) site is built by Asp-226 and Glu-227.

Belongs to the anthranilate phosphoribosyltransferase family. As to quaternary structure, homodimer. Requires Mg(2+) as cofactor.

It carries out the reaction N-(5-phospho-beta-D-ribosyl)anthranilate + diphosphate = 5-phospho-alpha-D-ribose 1-diphosphate + anthranilate. Its pathway is amino-acid biosynthesis; L-tryptophan biosynthesis; L-tryptophan from chorismate: step 2/5. In terms of biological role, catalyzes the transfer of the phosphoribosyl group of 5-phosphorylribose-1-pyrophosphate (PRPP) to anthranilate to yield N-(5'-phosphoribosyl)-anthranilate (PRA). The protein is Anthranilate phosphoribosyltransferase of Oleidesulfovibrio alaskensis (strain ATCC BAA-1058 / DSM 17464 / G20) (Desulfovibrio alaskensis).